The sequence spans 96 residues: Large ribosomal subunit protein bL21 (96 aa).

Belongs to the bacterial ribosomal protein bL21 family. In terms of assembly, part of the 50S ribosomal subunit. Contacts protein L20.

Its function is as follows. This protein binds to 23S rRNA in the presence of protein L20. This is Large ribosomal subunit protein bL21 from Chlorobium phaeobacteroides (strain BS1).